A 159-amino-acid chain; its full sequence is Small ribosomal subunit protein uS9 (159 aa).

This sequence belongs to the universal ribosomal protein uS9 family.

The chain is Small ribosomal subunit protein uS9 from Beijerinckia indica subsp. indica (strain ATCC 9039 / DSM 1715 / NCIMB 8712).